Reading from the N-terminus, the 286-residue chain is uncharacterized protein (286 aa).

The tat-type signal signal peptide spans 1–31; it reads MKKMSRRQFLKGMFGALAAGALTAGGGYGYA. A divalent metal cation-binding residues include Asp-65, His-67, Asp-97, Asn-130, His-221, and His-223.

This sequence belongs to the metallophosphoesterase superfamily. A divalent metal cation serves as cofactor. Predicted to be exported by the Tat system. The position of the signal peptide cleavage has not been experimentally proven.

This is an uncharacterized protein from Bacillus subtilis (strain 168).